We begin with the raw amino-acid sequence, 143 residues long: Ribosomal RNA large subunit methyltransferase H (143 aa).

Leucine 68 and glycine 95 together coordinate S-adenosyl-L-methionine.

It belongs to the RNA methyltransferase RlmH family. In terms of assembly, homodimer.

Its subcellular location is the cytoplasm. The catalysed reaction is pseudouridine(1915) in 23S rRNA + S-adenosyl-L-methionine = N(3)-methylpseudouridine(1915) in 23S rRNA + S-adenosyl-L-homocysteine + H(+). Its function is as follows. Specifically methylates the pseudouridine at position 1915 (m3Psi1915) in 23S rRNA. The protein is Ribosomal RNA large subunit methyltransferase H of Mycoplasma mobile (strain ATCC 43663 / 163K / NCTC 11711) (Mesomycoplasma mobile).